Here is a 468-residue protein sequence, read N- to C-terminus: Peroxisome proliferator-activated receptor alpha (468 aa).

The segment at residues 99 to 173 is a DNA-binding region (nuclear receptor); sequence NIECRICGDK…VGMSHNAIRF (75 aa). NR C4-type zinc fingers lie at residues 102-122 and 139-161; these read CRICGDKASGYHYGVHACEGC and CDRSCKIQKKNRNKCQYCRFHKC. An NR LBD domain is found at 239–466; it reads FVIHDMETLC…HPLLQEIYRD (228 aa). Residues 304 to 433 are required for heterodimerization with RXRA; sequence DQVTLLKYGV…PKLLQKMVDL (130 aa).

Belongs to the nuclear hormone receptor family. NR1 subfamily. In terms of assembly, heterodimer; with RXRA. This heterodimerization is required for DNA binding and transactivation activity. Interacts with NCOA3 coactivator. Interacts with CITED2; the interaction stimulates its transcriptional activity. Also interacts with PPARBP in vitro. Interacts with AKAP13, LPIN1, PRDM16 and coactivator NCOA6. Interacts with ASXL1 and ASXL2. Interacts with PER2. Interacts with SIRT1; the interaction seems to be modulated by NAD(+) levels. Interacts with CRY1 and CRY2. In hepatocytes, interacts with PAQR3 and HUWE1; the interactions promote PPARA poylubiquitination and HUWE1-mediated degradation. Ubiquitinated by E3 ubiquitin-protein ligase HUWE1; leading to proteasomal degradation. Post-translationally, phosphorylated. In terms of tissue distribution, highly expressed in liver, kidney and heart. Very weakly expressed in brain and testis.

The protein resides in the nucleus. Ligand-activated transcription factor. Key regulator of lipid metabolism. Activated by the endogenous ligand 1-palmitoyl-2-oleoyl-sn-glycerol-3-phosphocholine (16:0/18:1-GPC). Activated by oleylethanolamide, a naturally occurring lipid that regulates satiety. Receptor for peroxisome proliferators such as hypolipidemic drugs and fatty acids. Regulates the peroxisomal beta-oxidation pathway of fatty acids. Functions as a transcription activator for the ACOX1 and P450 genes. Transactivation activity requires heterodimerization with RXRA and is antagonized by NR2C2. May be required for the propagation of clock information to metabolic pathways regulated by PER2. The chain is Peroxisome proliferator-activated receptor alpha (Ppara) from Mus musculus (Mouse).